The chain runs to 518 residues: Probable cyclic di-GMP phosphodiesterase PdeN (518 aa).

Helical transmembrane passes span 16 to 36 and 236 to 256; these read CIVA…LVAW and VWYA…LCYY. An EAL domain is found at 261–514; it reads RMRPGREIMT…DFVRWLKKPY (254 aa).

The protein resides in the cell inner membrane. The catalysed reaction is 3',3'-c-di-GMP + H2O = 5'-phosphoguanylyl(3'-&gt;5')guanosine + H(+). Its function is as follows. Phosphodiesterase (PDE) that catalyzes the hydrolysis of cyclic-di-GMP (c-di-GMP) to 5'-pGpG. The chain is Probable cyclic di-GMP phosphodiesterase PdeN from Escherichia coli (strain K12).